The sequence spans 125 residues: Nascent polypeptide-associated complex protein (125 aa).

The NAC-A/B domain occupies 9–76 (PRMMKQMQKM…SKNTSKTAEK (68 aa)).

This sequence belongs to the NAC-alpha family. In terms of assembly, homodimer. Interacts with the ribosome. Binds ribosomal RNA.

In terms of biological role, contacts the emerging nascent chain on the ribosome. This chain is Nascent polypeptide-associated complex protein, found in Methanococcus vannielii (strain ATCC 35089 / DSM 1224 / JCM 13029 / OCM 148 / SB).